The primary structure comprises 273 residues: Dermonecrotic toxin LsaSicTox-alphaIB1aii (273 aa).

The active site involves H5. Residues E25 and D27 each contribute to the Mg(2+) site. Catalysis depends on H41, which acts as the Nucleophile. 2 cysteine pairs are disulfide-bonded: C45–C51 and C47–C190. D85 provides a ligand contact to Mg(2+).

The protein belongs to the arthropod phospholipase D family. Class II subfamily. It depends on Mg(2+) as a cofactor. As to expression, expressed by the venom gland.

The protein resides in the secreted. The catalysed reaction is an N-(acyl)-sphingosylphosphocholine = an N-(acyl)-sphingosyl-1,3-cyclic phosphate + choline. It catalyses the reaction an N-(acyl)-sphingosylphosphoethanolamine = an N-(acyl)-sphingosyl-1,3-cyclic phosphate + ethanolamine. The enzyme catalyses a 1-acyl-sn-glycero-3-phosphocholine = a 1-acyl-sn-glycero-2,3-cyclic phosphate + choline. It carries out the reaction a 1-acyl-sn-glycero-3-phosphoethanolamine = a 1-acyl-sn-glycero-2,3-cyclic phosphate + ethanolamine. In terms of biological role, dermonecrotic toxins cleave the phosphodiester linkage between the phosphate and headgroup of certain phospholipids (sphingolipid and lysolipid substrates), forming an alcohol (often choline) and a cyclic phosphate. This toxin acts on sphingomyelin (SM). It may also act on ceramide phosphoethanolamine (CPE), lysophosphatidylcholine (LPC) and lysophosphatidylethanolamine (LPE), but not on lysophosphatidylserine (LPS), and lysophosphatidylglycerol (LPG). It acts by transphosphatidylation, releasing exclusively cyclic phosphate products as second products. Induces dermonecrosis, hemolysis, increased vascular permeability, edema, inflammatory response, and platelet aggregation. This is Dermonecrotic toxin LsaSicTox-alphaIB1aii from Loxosceles sabina (Tucson recluse spider).